The sequence spans 526 residues: tRNA-2-methylthio-N(6)-dimethylallyladenosine synthase (526 aa).

The tract at residues 1 to 24 (MTQQLNHAKVNQHPGQATLPETAE) is disordered. Residues 28–144 (RTYEVKTYGC…LPTLLQRAEH (117 aa)) form the MTTase N-terminal domain. Positions 37, 73, 107, 181, 185, and 188 each coordinate [4Fe-4S] cluster. The region spanning 167–403 (RESAYAGWVS…MVVQEQVCEE (237 aa)) is the Radical SAM core domain. The region spanning 406-477 (QKLIGTTVEL…PFFLIADSGV (72 aa)) is the TRAM domain.

It belongs to the methylthiotransferase family. MiaB subfamily. As to quaternary structure, monomer. [4Fe-4S] cluster is required as a cofactor.

The protein resides in the cytoplasm. The catalysed reaction is N(6)-dimethylallyladenosine(37) in tRNA + (sulfur carrier)-SH + AH2 + 2 S-adenosyl-L-methionine = 2-methylsulfanyl-N(6)-dimethylallyladenosine(37) in tRNA + (sulfur carrier)-H + 5'-deoxyadenosine + L-methionine + A + S-adenosyl-L-homocysteine + 2 H(+). Catalyzes the methylthiolation of N6-(dimethylallyl)adenosine (i(6)A), leading to the formation of 2-methylthio-N6-(dimethylallyl)adenosine (ms(2)i(6)A) at position 37 in tRNAs that read codons beginning with uridine. This is tRNA-2-methylthio-N(6)-dimethylallyladenosine synthase from Corynebacterium glutamicum (strain R).